The following is a 497-amino-acid chain: MEKFVLSLDEGTTSARAIIFDRESNIHGIGQYEFPQHYPRPGWVEHNPEEIWDAQLRAIKDAIQSARIEPNQIAAIGVTNQRETTLVWDKDGKPLYNAIVWQCRRTAEMVEEIKREYGTMIKEKTGLVPDAYFSASKLKWLLDNVPGLREKAEKGEVMFGTVDTFLIYRLTGEHVTDYSNASRTMLFNIKKLDWDDELLELFDIPESVLPEVRESSEVYGYTKKELLGAEIPVSGDAGDQQAALFGQAAFEAGMVKATYGTGSFILVNTDKMVLYSDNLLTTIAWGLNGRVSYALEGSIFVTGAAVQWLRDGIKIIKHASETEELATKLESNEGVYFVPAFVGLGAPYWDQFARGIIIGITRGTGREHLARATLEAIAYLTRDVVDEMEKLVQIKELRVDGGATANDFLMQFQADILNRKVIRPVVKETTALGAAYLAGLAVDYWADTREIAELWKAERIFEPKMDEKTRERLYKGWKEAVKRAMGWAKVVDSAKSN.

Thr-12 provides a ligand contact to ADP. ATP-binding residues include Thr-12, Thr-13, and Ser-14. Position 12 (Thr-12) interacts with sn-glycerol 3-phosphate. Arg-16 lines the ADP pocket. Positions 82, 83, 132, and 239 each coordinate sn-glycerol 3-phosphate. Positions 82, 83, 132, 239, and 240 each coordinate glycerol. The ADP site is built by Thr-261 and Gly-303. 4 residues coordinate ATP: Thr-261, Gly-303, Gln-307, and Gly-402. The ADP site is built by Gly-402 and Asn-406.

The protein belongs to the FGGY kinase family. In terms of assembly, homodimer.

The enzyme catalyses glycerol + ATP = sn-glycerol 3-phosphate + ADP + H(+). Its pathway is polyol metabolism; glycerol degradation via glycerol kinase pathway; sn-glycerol 3-phosphate from glycerol: step 1/1. Key enzyme in the regulation of glycerol uptake and metabolism. Catalyzes the phosphorylation of glycerol to yield sn-glycerol 3-phosphate. Can utilize other nucleoside triphosphates (GTP, CTP, UTP and ITP) as a phosphoryl donor. The protein is Glycerol kinase of Thermococcus kodakarensis (strain ATCC BAA-918 / JCM 12380 / KOD1) (Pyrococcus kodakaraensis (strain KOD1)).